The sequence spans 57 residues: UPF0434 protein swp_2279 (57 aa).

Belongs to the UPF0434 family.

This is UPF0434 protein swp_2279 from Shewanella piezotolerans (strain WP3 / JCM 13877).